The following is a 177-amino-acid chain: Translation initiation factor IF-3 (177 aa).

Belongs to the IF-3 family. In terms of assembly, monomer.

It localises to the cytoplasm. IF-3 binds to the 30S ribosomal subunit and shifts the equilibrium between 70S ribosomes and their 50S and 30S subunits in favor of the free subunits, thus enhancing the availability of 30S subunits on which protein synthesis initiation begins. In Rhizobium meliloti (strain 1021) (Ensifer meliloti), this protein is Translation initiation factor IF-3.